The primary structure comprises 251 residues: Endoglucanase CX (251 aa).

It belongs to the glycosyl hydrolase 9 (cellulase E) family.

The enzyme catalyses Endohydrolysis of (1-&gt;4)-beta-D-glucosidic linkages in cellulose, lichenin and cereal beta-D-glucans.. Functionally, degrades carboxymethylcellulose (CMC). The polypeptide is Endoglucanase CX (Prunus persica (Peach)).